Consider the following 976-residue polypeptide: Probable basic-leucine zipper transcription factor Q (976 aa).

Coiled coils occupy residues 57–110 (AIDS…QYQQ) and 136–287 (QQQQ…QQQQ). The interval 104 to 128 (YQQQYQQPYTTPSPPDQIDYNQQLS) is disordered. 2 stretches are compositionally biased toward polar residues: residues 374-385 (TNFNGTNNSTPN) and 393-411 (KLSS…SPPS). The tract at residues 374-499 (TNFNGTNNST…PIDSNGDFDL (126 aa)) is disordered. Low complexity-rich tracts occupy residues 420–468 (PKNN…FNNN) and 476–490 (STTT…MTSP). The bZIP domain maps to 504–567 (EKKKSISRIN…GVEVMRPEPE (64 aa)). Residues 505–507 (KKK) are basic motif. A leucine-zipper region spans residues 509-516 (ISRINQNL). Over residues 855 to 938 (ENQSNNFGNN…VNSNNNNFNN (84 aa)) the composition is skewed to low complexity. Residues 855 to 957 (ENQSNNFGNN…SADAIPYPST (103 aa)) form a disordered region.

The protein belongs to the bZIP family.

The protein localises to the nucleus. Functionally, probable transcriptional regulator. This chain is Probable basic-leucine zipper transcription factor Q (bzpQ), found in Dictyostelium discoideum (Social amoeba).